The following is a 558-amino-acid chain: MAFKSDIEIAQESTMLPVAELAEKLNIAEEYVESYGKYKAKIDYNLLKEKGNTPDGKLILVTAINPTPAGEGKTTTTVGLGDALTHLGKKVVIALREPSLGPVFGVKGGAAGGGYAQVVPMEDINLHFTGDLHAIGAANNLIAALLDNHIYQGNALDIDVRRITWKRCMDMNDRQLRYINDGLGGKANGMPREDGFDITVASEIMAILCLSSDLDDLKQRVERIIVGYNRKGEPVTAGQLKAQGAVAALLKDALKPNLVQTLEHTPSFIHGGPFANIAHGCNSVMATKMALKLGDYVVTEAGFGADLGAEKFLDIKCRLSGLEPDAVVIVATVRALKSHGGVAKADLNQENLAALKEGLPNLLKHVENITVNFGLPAVVAINRFPTDTLAEVQLVEEECKKLGVNVALSEVWEKGGAGGVELAEEVLKLMDSPKNFTFAYDIDLGLKEKITAIATKIYGADGVDFIGSSTKDIEGIESIGYRNIPVCMAKTQYSLSDDQKKLGRPTGFRISIRSVKVSAGAGFAVALTGDIMTMPGLPKVPAAESIDVDNTGRISGLF.

67-74 (TPAGEGKT) lines the ATP pocket.

This sequence belongs to the formate--tetrahydrofolate ligase family.

It carries out the reaction (6S)-5,6,7,8-tetrahydrofolate + formate + ATP = (6R)-10-formyltetrahydrofolate + ADP + phosphate. The protein operates within one-carbon metabolism; tetrahydrofolate interconversion. This chain is Formate--tetrahydrofolate ligase 2, found in Desulfitobacterium hafniense (strain Y51).